A 475-amino-acid chain; its full sequence is tRNA-2-methylthio-N(6)-dimethylallyladenosine synthase (475 aa).

The MTTase N-terminal domain occupies 2–119; that stretch reads AKLHITTWGC…LPEMINKIRG (118 aa). Residues C11, C48, C82, C156, C160, and C163 each coordinate [4Fe-4S] cluster. Residues 142-374 enclose the Radical SAM core domain; the sequence is RAEGPTAFVS…QQRINHQAMQ (233 aa). A TRAM domain is found at 377–440; the sequence is RAMLGTEQRV…TNSLRGEVVR (64 aa).

Belongs to the methylthiotransferase family. MiaB subfamily. Monomer. [4Fe-4S] cluster is required as a cofactor.

The protein localises to the cytoplasm. It carries out the reaction N(6)-dimethylallyladenosine(37) in tRNA + (sulfur carrier)-SH + AH2 + 2 S-adenosyl-L-methionine = 2-methylsulfanyl-N(6)-dimethylallyladenosine(37) in tRNA + (sulfur carrier)-H + 5'-deoxyadenosine + L-methionine + A + S-adenosyl-L-homocysteine + 2 H(+). Functionally, catalyzes the methylthiolation of N6-(dimethylallyl)adenosine (i(6)A), leading to the formation of 2-methylthio-N6-(dimethylallyl)adenosine (ms(2)i(6)A) at position 37 in tRNAs that read codons beginning with uridine. This chain is tRNA-2-methylthio-N(6)-dimethylallyladenosine synthase, found in Actinobacillus pleuropneumoniae serotype 3 (strain JL03).